The sequence spans 487 residues: ATP synthase subunit beta (487 aa).

164–171 (GGAGVGKT) contacts ATP.

Belongs to the ATPase alpha/beta chains family. F-type ATPases have 2 components, CF(1) - the catalytic core - and CF(0) - the membrane proton channel. CF(1) has five subunits: alpha(3), beta(3), gamma(1), delta(1), epsilon(1). CF(0) has four main subunits: a(1), b(1), b'(1) and c(9-12).

Its subcellular location is the cellular thylakoid membrane. The catalysed reaction is ATP + H2O + 4 H(+)(in) = ADP + phosphate + 5 H(+)(out). In terms of biological role, produces ATP from ADP in the presence of a proton gradient across the membrane. The catalytic sites are hosted primarily by the beta subunits. This Synechococcus sp. (strain CC9311) protein is ATP synthase subunit beta.